The primary structure comprises 137 residues: Type III secretion protein HrcQb (137 aa).

Residues 1 to 22 (MSTEDLYQDDVESLEDYDDETA) show a composition bias toward acidic residues. The segment at 1–67 (MSTEDLYQDD…EQQAPSGLDS (67 aa)) is disordered. The segment covering 23–33 (EQEHEHEHEQQ) has biased composition (basic and acidic residues). Over residues 36–58 (EPDDESEYAEAEPDDDEQEEQEE) the composition is skewed to acidic residues.

This sequence belongs to the FliN/MopA/SpaO family. In terms of assembly, homotetramer. The four monomers assemble into two tightly bound homodimers. Interacts with HrcQa.

It is found in the cytoplasm. In terms of biological role, component of the type III secretion system, which is required for effector protein delivery, parasitism, and pathogenicity. Probably participates in the formation of a C-ring-like assembly along with HrcQa. The chain is Type III secretion protein HrcQb (hrcQb) from Pseudomonas syringae pv. tomato (strain ATCC BAA-871 / DC3000).